The following is a 137-amino-acid chain: Small ribosomal subunit protein uS12 (137 aa).

2 disordered regions span residues Met-1–Ser-21 and Lys-33–Lys-57.

It belongs to the universal ribosomal protein uS12 family. In terms of assembly, part of the 30S ribosomal subunit. Contacts proteins S8 and S17. May interact with IF1 in the 30S initiation complex.

In terms of biological role, with S4 and S5 plays an important role in translational accuracy. Functionally, interacts with and stabilizes bases of the 16S rRNA that are involved in tRNA selection in the A site and with the mRNA backbone. Located at the interface of the 30S and 50S subunits, it traverses the body of the 30S subunit contacting proteins on the other side and probably holding the rRNA structure together. The combined cluster of proteins S8, S12 and S17 appears to hold together the shoulder and platform of the 30S subunit. This chain is Small ribosomal subunit protein uS12, found in Streptococcus pyogenes serotype M1.